A 301-amino-acid polypeptide reads, in one-letter code: Pantothenate synthetase (301 aa).

ATP is bound at residue 30-37; sequence MGNLHEGH. The active-site Proton donor is histidine 37. Glutamine 61 is a binding site for (R)-pantoate. Position 61 (glutamine 61) interacts with beta-alanine. 149–152 lines the ATP pocket; sequence GEKD. Glutamine 155 is a binding site for (R)-pantoate. Residues valine 178 and 186–189 each bind ATP; that span reads MSSR.

Belongs to the pantothenate synthetase family. As to quaternary structure, homodimer.

Its subcellular location is the cytoplasm. The enzyme catalyses (R)-pantoate + beta-alanine + ATP = (R)-pantothenate + AMP + diphosphate + H(+). It participates in cofactor biosynthesis; (R)-pantothenate biosynthesis; (R)-pantothenate from (R)-pantoate and beta-alanine: step 1/1. Catalyzes the condensation of pantoate with beta-alanine in an ATP-dependent reaction via a pantoyl-adenylate intermediate. The polypeptide is Pantothenate synthetase (Vibrio parahaemolyticus serotype O3:K6 (strain RIMD 2210633)).